Reading from the N-terminus, the 168-residue chain is MTNQILSNDDWGRYKKEGFLVTKFGDLTDYVMNWARSGSLWPMTFGLACCAVEMMHTASSRYDLDRYGIMFRASPRQSDVMIVAGTLTNKMAAALRKVYDQMADPKYVISMGSCANGGGYYHYSYSVVRGCDRIVPVDVYVPGCPPTAEALLYGMLCLQNKIKRTRNG.

Cys49, Cys50, Cys114, and Cys144 together coordinate [4Fe-4S] cluster.

It belongs to the complex I 20 kDa subunit family. NDH-1 is composed of 14 different subunits. Subunits NuoB, C, D, E, F, and G constitute the peripheral sector of the complex. The cofactor is [4Fe-4S] cluster.

It is found in the cell membrane. The catalysed reaction is a quinone + NADH + 5 H(+)(in) = a quinol + NAD(+) + 4 H(+)(out). In terms of biological role, NDH-1 shuttles electrons from NADH, via FMN and iron-sulfur (Fe-S) centers, to quinones in the respiratory chain. Couples the redox reaction to proton translocation (for every two electrons transferred, four hydrogen ions are translocated across the cytoplasmic membrane), and thus conserves the redox energy in a proton gradient. The sequence is that of NADH-quinone oxidoreductase subunit B from Wolbachia pipientis wMel.